The primary structure comprises 168 residues: Transcription elongation factor GreB (168 aa).

The protein belongs to the GreA/GreB family. GreB subfamily.

Functionally, necessary for efficient RNA polymerase transcription elongation past template-encoded arresting sites. The arresting sites in DNA have the property of trapping a certain fraction of elongating RNA polymerases that pass through, resulting in locked ternary complexes. Cleavage of the nascent transcript by cleavage factors such as GreA or GreB allows the resumption of elongation from the new 3'terminus. GreB releases sequences of up to 9 nucleotides in length. This chain is Transcription elongation factor GreB, found in Xanthomonas axonopodis pv. citri (strain 306).